The primary structure comprises 94 residues: Large ribosomal subunit protein bL27 (94 aa).

The propeptide occupies 1–9; it reads MLKLNLQFF. The interval 13 to 32 is disordered; the sequence is KGLGSTKNGRDSESKRLGAK. Residues 20–32 are compositionally biased toward basic and acidic residues; it reads NGRDSESKRLGAK.

The protein belongs to the bacterial ribosomal protein bL27 family. In terms of processing, the N-terminus is cleaved by ribosomal processing cysteine protease Prp.

The polypeptide is Large ribosomal subunit protein bL27 (Staphylococcus saprophyticus subsp. saprophyticus (strain ATCC 15305 / DSM 20229 / NCIMB 8711 / NCTC 7292 / S-41)).